The chain runs to 161 residues: 4-hydroxybenzoyl-CoA reductase subunit gamma (161 aa).

In terms of domain architecture, 2Fe-2S ferredoxin-type spans 3-79; that stretch reads NILRLTLNGR…GKKVETVESL (77 aa). Residues cysteine 41, cysteine 46, cysteine 49, cysteine 61, cysteine 100, cysteine 103, cysteine 135, and cysteine 137 each contribute to the [2Fe-2S] cluster site.

In terms of assembly, heterohexamer of two alpha, two beta and two gamma subunits. [2Fe-2S] cluster serves as cofactor.

It carries out the reaction oxidized 2[4Fe-4S]-[ferredoxin] + benzoyl-CoA + H2O = 4-hydroxybenzoyl-CoA + reduced 2[4Fe-4S]-[ferredoxin] + 2 H(+). With respect to regulation, inactivated by low concentrations of cyanide in vitro. Its function is as follows. Component of a complex that catalyzes the reductive dehydroxylation of 4-hydroxybenzoyl-CoA to benzoyl-CoA. Reaction is not reversible. Is a key enzyme in the anaerobic degradation of phenolic compounds. This is 4-hydroxybenzoyl-CoA reductase subunit gamma (hcrC) from Thauera aromatica.